The following is a 355-amino-acid chain: Phosphoribosylformylglycinamidine cyclo-ligase (355 aa).

Belongs to the AIR synthase family.

It is found in the cytoplasm. It carries out the reaction 2-formamido-N(1)-(5-O-phospho-beta-D-ribosyl)acetamidine + ATP = 5-amino-1-(5-phospho-beta-D-ribosyl)imidazole + ADP + phosphate + H(+). It functions in the pathway purine metabolism; IMP biosynthesis via de novo pathway; 5-amino-1-(5-phospho-D-ribosyl)imidazole from N(2)-formyl-N(1)-(5-phospho-D-ribosyl)glycinamide: step 2/2. This Hamiltonella defensa subsp. Acyrthosiphon pisum (strain 5AT) protein is Phosphoribosylformylglycinamidine cyclo-ligase.